A 140-amino-acid chain; its full sequence is Nucleoside diphosphate kinase (140 aa).

Positions 11, 59, 87, 93, 104, and 114 each coordinate ATP. His-117 (pros-phosphohistidine intermediate) is an active-site residue.

It belongs to the NDK family. As to quaternary structure, homotetramer. The cofactor is Mg(2+).

Its subcellular location is the cytoplasm. It carries out the reaction a 2'-deoxyribonucleoside 5'-diphosphate + ATP = a 2'-deoxyribonucleoside 5'-triphosphate + ADP. It catalyses the reaction a ribonucleoside 5'-diphosphate + ATP = a ribonucleoside 5'-triphosphate + ADP. In terms of biological role, major role in the synthesis of nucleoside triphosphates other than ATP. The ATP gamma phosphate is transferred to the NDP beta phosphate via a ping-pong mechanism, using a phosphorylated active-site intermediate. In Bradyrhizobium sp. (strain BTAi1 / ATCC BAA-1182), this protein is Nucleoside diphosphate kinase.